The sequence spans 219 residues: Probable GTP-binding protein EngB (219 aa).

The 178-residue stretch at 42–219 (SVPEIAFAGR…RTAVLEAVEL (178 aa)) folds into the EngB-type G domain. GTP-binding positions include 50–57 (GRSNVGKS), 77–81 (GRTQE), 97–100 (DMPG), 164–167 (TKAD), and 198–200 (TSS). 2 residues coordinate Mg(2+): Ser-57 and Thr-79.

Belongs to the TRAFAC class TrmE-Era-EngA-EngB-Septin-like GTPase superfamily. EngB GTPase family. Mg(2+) serves as cofactor.

Necessary for normal cell division and for the maintenance of normal septation. The polypeptide is Probable GTP-binding protein EngB (Sphingopyxis alaskensis (strain DSM 13593 / LMG 18877 / RB2256) (Sphingomonas alaskensis)).